The chain runs to 306 residues: NAD kinase 1 (306 aa).

The Proton acceptor role is filled by Asp67. NAD(+)-binding positions include 67–68 (DG), 149–150 (ND), and Asp181.

This sequence belongs to the NAD kinase family. Requires a divalent metal cation as cofactor.

It localises to the cytoplasm. It carries out the reaction NAD(+) + ATP = ADP + NADP(+) + H(+). Its function is as follows. Involved in the regulation of the intracellular balance of NAD and NADP, and is a key enzyme in the biosynthesis of NADP. Catalyzes specifically the phosphorylation on 2'-hydroxyl of the adenosine moiety of NAD to yield NADP. The chain is NAD kinase 1 from Synechococcus sp. (strain ATCC 27144 / PCC 6301 / SAUG 1402/1) (Anacystis nidulans).